Reading from the N-terminus, the 609-residue chain is MSDERRLPGSAVGWLVCGGLSLLANAWGILSVGAKQKKWKPLEFLLCTLAATHMLNVAVPIATYSVVQLRRQRPDFEWNEGLCKVFVSTFYTLTLATCFSVTSLSYHRMWMVCWPVNYRLSNAKKQAVHTVMGIWMVSFILSALPAVGWHDTSERFYTHGCRFIVAEIGLGFGVCFLLLVGGSVAMGVICTAIALFQTLAVQVGRQADRRAFTVPTIVVEDAQGKRRSSIDGSEPAKTSLQTTGLVTTIVFIYDCLMGFPVLVVSFSSLRADASAPWMALCVLWCSVAQALLLPVFLWACDRYRADLKAVREKCMALMANDEESDDETSLEGGISPDLVLERSLDYGYGGDFVALDRMAKYEISALEGGLPQLYPLRPLQEDKMQYLQVPPTRRFSHDDADVWAAVPLPAFLPRWGSGEDLAALAHLVLPAGPERRRASLLAFAEDAPPSRARRRSAESLLSLRPSALDSGPRGARDSPPGSPRRRPGPGPRSASASLLPDAFALTAFECEPQALRRPPGPFPAAPAAPDGADPGEAPTPPSSAQRSPGPRPSAHSHAGSLRPGLSASWGEPGGLRAAGGGGSTSSFLSSPSESSGYATLHSDSLGSAS.

Residues 1 to 11 lie on the Extracellular side of the membrane; the sequence is MSDERRLPGSA. The helical transmembrane segment at 12–32 threads the bilayer; it reads VGWLVCGGLSLLANAWGILSV. The Cytoplasmic segment spans residues 33 to 41; sequence GAKQKKWKP. A helical membrane pass occupies residues 42 to 62; that stretch reads LEFLLCTLAATHMLNVAVPIA. The Extracellular segment spans residues 63–84; that stretch reads TYSVVQLRRQRPDFEWNEGLCK. A helical transmembrane segment spans residues 85 to 105; sequence VFVSTFYTLTLATCFSVTSLS. The Cytoplasmic portion of the chain corresponds to 106–126; that stretch reads YHRMWMVCWPVNYRLSNAKKQ. A helical transmembrane segment spans residues 127–147; sequence AVHTVMGIWMVSFILSALPAV. Residues 148 to 175 lie on the Extracellular side of the membrane; it reads GWHDTSERFYTHGCRFIVAEIGLGFGVC. A helical transmembrane segment spans residues 176–196; the sequence is FLLLVGGSVAMGVICTAIALF. Over 197–243 the chain is Cytoplasmic; the sequence is QTLAVQVGRQADRRAFTVPTIVVEDAQGKRRSSIDGSEPAKTSLQTT. A helical membrane pass occupies residues 244 to 264; it reads GLVTTIVFIYDCLMGFPVLVV. Topologically, residues 265–276 are extracellular; the sequence is SFSSLRADASAP. The chain crosses the membrane as a helical span at residues 277–297; the sequence is WMALCVLWCSVAQALLLPVFL. Residues 298–609 are Cytoplasmic-facing; sequence WACDRYRADL…LHSDSLGSAS (312 aa). Disordered stretches follow at residues 446-496 and 514-609; these read DAPP…SASA and ALRR…GSAS. Composition is skewed to low complexity over residues 458-479 and 527-536; these read ESLL…RDSP and AAPDGADPGE. Over residues 571 to 583 the composition is skewed to gly residues; that stretch reads EPGGLRAAGGGGS. The segment covering 584–596 has biased composition (low complexity); sequence TSSFLSSPSESSG.

Belongs to the G-protein coupled receptor 1 family.

Its subcellular location is the cell membrane. Orphan receptor. This chain is Probable G-protein coupled receptor 153 (GPR153), found in Homo sapiens (Human).